The primary structure comprises 436 residues: UPF0597 protein DP0591 (436 aa).

Belongs to the UPF0597 family.

This Desulfotalea psychrophila (strain LSv54 / DSM 12343) protein is UPF0597 protein DP0591.